The sequence spans 115 residues: MNPLIQSLTEGQLRSDIPEFRAGDTVRVHAKVVEGTRERIQIFEGVVISRKGQGISEMYTVRKISGGIGVERTFPIHTPRVDKIEVVRYGKVRRAKLYYLRALQGKAARIKEIRR.

This sequence belongs to the bacterial ribosomal protein bL19 family.

This protein is located at the 30S-50S ribosomal subunit interface and may play a role in the structure and function of the aminoacyl-tRNA binding site. The sequence is that of Large ribosomal subunit protein bL19 from Streptococcus uberis (strain ATCC BAA-854 / 0140J).